Consider the following 552-residue polypeptide: Membrane protein insertase YidC (552 aa).

A helical transmembrane segment spans residues 6-26; it reads NLLLAAIAAVILMLFIRWNHF. 2 stretches are compositionally biased toward polar residues: residues 32-41 and 60-70; these read QHQAGNTPAG and PTASDTPQATA. The interval 32 to 70 is disordered; it reads QHQAGNTPAGSSIAAIAPDSNGDIPSAVPTASDTPQATA. Transmembrane regions (helical) follow at residues 365-387, 431-451, 472-492, and 508-528; these read WGLA…SAAS, FGGC…YWVL, MDPY…MQKL, and LPFV…LYWV.

The protein belongs to the OXA1/ALB3/YidC family. Type 1 subfamily. As to quaternary structure, interacts with the Sec translocase complex via SecD. Specifically interacts with transmembrane segments of nascent integral membrane proteins during membrane integration.

Its subcellular location is the cell inner membrane. In terms of biological role, required for the insertion and/or proper folding and/or complex formation of integral membrane proteins into the membrane. Involved in integration of membrane proteins that insert both dependently and independently of the Sec translocase complex, as well as at least some lipoproteins. Aids folding of multispanning membrane proteins. This is Membrane protein insertase YidC from Cellvibrio japonicus (strain Ueda107) (Pseudomonas fluorescens subsp. cellulosa).